Here is a 350-residue protein sequence, read N- to C-terminus: Cilia- and flagella-associated protein 36 (350 aa).

Residues 142 to 167 are a coiled coil; the sequence is SELEQQEMKILQEVLRRSKEEYDLQM. 2 disordered regions span residues 171 to 233 and 301 to 337; these read GLGS…ATTA and RQTG…QKRK. The span at 177–220 shows a compositional bias: polar residues; sequence LASTSSSVSETPQNPEQRLSNGVSDPLTLTQPDSEMEESSTATQ. Residues 280–350 adopt a coiled-coil conformation; that stretch reads VALQQRSEYL…EKLKEEVIKK (71 aa).

It belongs to the CFAP36 family.

Its subcellular location is the nucleus. It localises to the cytoplasm. The protein resides in the cell projection. The protein localises to the cilium. It is found in the flagellum. The protein is Cilia- and flagella-associated protein 36 of Danio rerio (Zebrafish).